A 146-amino-acid polypeptide reads, in one-letter code: Putative nickel-responsive regulator 1 (146 aa).

The Ni(2+) site is built by H81, H92, Y94, and C100.

It belongs to the transcriptional regulatory CopG/NikR family. Ni(2+) serves as cofactor.

Transcriptional regulator. The polypeptide is Putative nickel-responsive regulator 1 (Methanosarcina mazei (strain ATCC BAA-159 / DSM 3647 / Goe1 / Go1 / JCM 11833 / OCM 88) (Methanosarcina frisia)).